The chain runs to 67 residues: DNA-directed RNA polymerase subunit omega (67 aa).

This sequence belongs to the RNA polymerase subunit omega family. The RNAP catalytic core consists of 2 alpha, 1 beta, 1 beta' and 1 omega subunit. When a sigma factor is associated with the core the holoenzyme is formed, which can initiate transcription.

It carries out the reaction RNA(n) + a ribonucleoside 5'-triphosphate = RNA(n+1) + diphosphate. Its function is as follows. Promotes RNA polymerase assembly. Latches the N- and C-terminal regions of the beta' subunit thereby facilitating its interaction with the beta and alpha subunits. This is DNA-directed RNA polymerase subunit omega from Polynucleobacter asymbioticus (strain DSM 18221 / CIP 109841 / QLW-P1DMWA-1) (Polynucleobacter necessarius subsp. asymbioticus).